The chain runs to 504 residues: MSIKAEEISSIIKQQIENYHSELKVSDVGTVTYIGDGIARAHGLDNAMAGELLEFSNGVMGMAQNLETNDVGIIILGPYTEIREGDEVRRTGKIMEVPVGEALIGRVVNSLGQPVDGLGPIETTGTRPIEAVAPGVMQRQSVNEPLQTGIKAIDALVPIGRGQRELIIGDRQTGKTSVAIDTILNQADQDMICIYVAIGQKESTVRNAVETLRHHGALDYTIVVTAAASQPAPLLYLAPYAGVAMAEEFMYNGKHVLVVYDDLSKQAAAYRELSLLLRRPPGREAYPGDVFYLHSRLLERAAKLNDSLGGGSITALPFVETQAGDISAYIPTNVISITDGQIFLQSDLFFSGVRPAINAGLSVSRVGGSAQIKAMKTVAGTLRLDLAAYRELESFSQFGSDLDAATRAKLERGKRTVEVLKQDLHKPLKVEKQVLILYALVHKYLDDVPVHDVLRFESEMNTWFDHNRPELLEEIRTTKKLPDEAKLEAALKEFKNTFVPSEEK.

169–176 (GDRQTGKT) is an ATP binding site.

Belongs to the ATPase alpha/beta chains family. In terms of assembly, F-type ATPases have 2 components, CF(1) - the catalytic core - and CF(0) - the membrane proton channel. CF(1) has five subunits: alpha(3), beta(3), gamma(1), delta(1), epsilon(1). CF(0) has three main subunits: a(1), b(2) and c(9-12). The alpha and beta chains form an alternating ring which encloses part of the gamma chain. CF(1) is attached to CF(0) by a central stalk formed by the gamma and epsilon chains, while a peripheral stalk is formed by the delta and b chains.

It localises to the cell membrane. The catalysed reaction is ATP + H2O + 4 H(+)(in) = ADP + phosphate + 5 H(+)(out). Produces ATP from ADP in the presence of a proton gradient across the membrane. The alpha chain is a regulatory subunit. This is ATP synthase subunit alpha 2 from Listeria welshimeri serovar 6b (strain ATCC 35897 / DSM 20650 / CCUG 15529 / CIP 8149 / NCTC 11857 / SLCC 5334 / V8).